The following is a 328-amino-acid chain: Putative HTH-type transcriptional regulatory protein MA_3524 (328 aa).

The HTH cro/C1-type domain occupies 132 to 190; the sequence is LKKARTDQSMSLGTLASMVGVSRRTISKYEEEGMDASIDVVLQLEDIFGVELARPIDIL. Positions 143–162 form a DNA-binding region, H-T-H motif; it reads LGTLASMVGVSRRTISKYEE.

The polypeptide is Putative HTH-type transcriptional regulatory protein MA_3524 (Methanosarcina acetivorans (strain ATCC 35395 / DSM 2834 / JCM 12185 / C2A)).